Reading from the N-terminus, the 203-residue chain is Probable nicotinate-nucleotide adenylyltransferase (203 aa).

It belongs to the NadD family.

It carries out the reaction nicotinate beta-D-ribonucleotide + ATP + H(+) = deamido-NAD(+) + diphosphate. It participates in cofactor biosynthesis; NAD(+) biosynthesis; deamido-NAD(+) from nicotinate D-ribonucleotide: step 1/1. Functionally, catalyzes the reversible adenylation of nicotinate mononucleotide (NaMN) to nicotinic acid adenine dinucleotide (NaAD). This Prosthecochloris aestuarii (strain DSM 271 / SK 413) protein is Probable nicotinate-nucleotide adenylyltransferase.